The following is a 285-amino-acid chain: Seed agglutinin 2 (285 aa).

The signal sequence occupies residues 1-31 (MASYKFKTQNSFLLLLSISFFFLLLLNKVNS). N-linked (GlcNAc...) asparagine glycosylation is present at asparagine 147. Residues glutamate 156 and aspartate 158 each contribute to the Mn(2+) site. Residues aspartate 158, asparagine 162, and aspartate 166 each contribute to the Ca(2+) site. Residues aspartate 166 and histidine 171 each contribute to the Mn(2+) site.

Belongs to the leguminous lectin family. In terms of assembly, homotetramer. In terms of processing, mostly found in non-glycosylated form. Expressed in seed.

Functionally, seed lectin. This Robinia pseudoacacia (Black locust) protein is Seed agglutinin 2.